The sequence spans 732 residues: 1,4-alpha-glucan branching enzyme GlgB (732 aa).

Aspartate 415 (nucleophile) is an active-site residue. Glutamate 468 serves as the catalytic Proton donor.

This sequence belongs to the glycosyl hydrolase 13 family. GlgB subfamily. As to quaternary structure, monomer.

The enzyme catalyses Transfers a segment of a (1-&gt;4)-alpha-D-glucan chain to a primary hydroxy group in a similar glucan chain.. Its pathway is glycan biosynthesis; glycogen biosynthesis. Functionally, catalyzes the formation of the alpha-1,6-glucosidic linkages in glycogen by scission of a 1,4-alpha-linked oligosaccharide from growing alpha-1,4-glucan chains and the subsequent attachment of the oligosaccharide to the alpha-1,6 position. The polypeptide is 1,4-alpha-glucan branching enzyme GlgB (Nitrosomonas eutropha (strain DSM 101675 / C91 / Nm57)).